Here is a 328-residue protein sequence, read N- to C-terminus: DNA-directed RNA polymerase subunit alpha (328 aa).

The alpha N-terminal domain (alpha-NTD) stretch occupies residues 1-230 (MNKIKITPSV…QSQMEIFTND (230 aa)). The alpha C-terminal domain (alpha-CTD) stretch occupies residues 243–328 (NSEIFYQPLD…ILKKIEQNKS (86 aa)).

It belongs to the RNA polymerase alpha chain family. As to quaternary structure, homodimer. The RNAP catalytic core consists of 2 alpha, 1 beta, 1 beta' and 1 omega subunit. When a sigma factor is associated with the core the holoenzyme is formed, which can initiate transcription.

It catalyses the reaction RNA(n) + a ribonucleoside 5'-triphosphate = RNA(n+1) + diphosphate. DNA-dependent RNA polymerase catalyzes the transcription of DNA into RNA using the four ribonucleoside triphosphates as substrates. In Nitratiruptor sp. (strain SB155-2), this protein is DNA-directed RNA polymerase subunit alpha.